Consider the following 365-residue polypeptide: Cobalt-precorrin-5B C(1)-methyltransferase (365 aa).

This sequence belongs to the CbiD family.

It carries out the reaction Co-precorrin-5B + S-adenosyl-L-methionine = Co-precorrin-6A + S-adenosyl-L-homocysteine. It functions in the pathway cofactor biosynthesis; adenosylcobalamin biosynthesis; cob(II)yrinate a,c-diamide from sirohydrochlorin (anaerobic route): step 6/10. Functionally, catalyzes the methylation of C-1 in cobalt-precorrin-5B to form cobalt-precorrin-6A. This chain is Cobalt-precorrin-5B C(1)-methyltransferase, found in Clostridium perfringens (strain SM101 / Type A).